A 230-amino-acid polypeptide reads, in one-letter code: Transcriptional regulatory protein CitT (230 aa).

Residues 6–124 (KVLIIEDDFR…VLHQRLDAYV (119 aa)) enclose the Response regulatory domain. Position 59 is a 4-aspartylphosphate (D59). A DNA-binding region (H-T-H motif) is located at residues 184–203 (AMEGARLIGASRSTVRRYFE).

Phosphorylated by CitS.

The protein resides in the cytoplasm. Its function is as follows. Member of the two-component regulatory system CitT/CitS. The protein is Transcriptional regulatory protein CitT (citT) of Halalkalibacterium halodurans (strain ATCC BAA-125 / DSM 18197 / FERM 7344 / JCM 9153 / C-125) (Bacillus halodurans).